Here is a 74-residue protein sequence, read N- to C-terminus: Small ribosomal subunit protein eS17 (74 aa).

It belongs to the eukaryotic ribosomal protein eS17 family.

This is Small ribosomal subunit protein eS17 from Ignicoccus hospitalis (strain KIN4/I / DSM 18386 / JCM 14125).